The following is a 407-amino-acid chain: Tyrosine--tRNA ligase (407 aa).

Residue Y35 participates in L-tyrosine binding. Residues 40 to 49 (PTADSLHVGH) carry the 'HIGH' region motif. Positions 168 and 172 each coordinate L-tyrosine. The 'KMSKS' region signature appears at 228 to 232 (KMGKT). An ATP-binding site is contributed by K231. Positions 341-405 (NLLVDLLVKC…RGKKNFNRIV (65 aa)) constitute an S4 RNA-binding domain.

It belongs to the class-I aminoacyl-tRNA synthetase family. TyrS type 1 subfamily. Homodimer.

The protein resides in the cytoplasm. It carries out the reaction tRNA(Tyr) + L-tyrosine + ATP = L-tyrosyl-tRNA(Tyr) + AMP + diphosphate + H(+). Functionally, catalyzes the attachment of tyrosine to tRNA(Tyr) in a two-step reaction: tyrosine is first activated by ATP to form Tyr-AMP and then transferred to the acceptor end of tRNA(Tyr). This chain is Tyrosine--tRNA ligase, found in Clostridium botulinum (strain Kyoto / Type A2).